The sequence spans 541 residues: Atlastin (541 aa).

Over 1–424 (MGGSAVQVIN…NIFKAARTPA (424 aa)) the chain is Cytoplasmic. Residues 35–284 (DRFVCVVSVA…LVPMLLAPDN (250 aa)) enclose the GB1/RHD3-type G domain. 5 residues coordinate GDP: arginine 48, lysine 49, glycine 50, lysine 51, and serine 52. GTP contacts are provided by arginine 48, lysine 49, glycine 50, lysine 51, serine 52, and phenylalanine 53. Residue serine 52 participates in Mg(2+) binding. Aspartate 121 is a Mg(2+) binding site. Residues arginine 192, aspartate 193, and valine 251 each contribute to the GDP site. Residues arginine 192, aspartate 193, and valine 251 each coordinate GTP. The 3HB (three-helix bundle) domain stretch occupies residues 322-413 (MLVATAEANH…FTNYQAHNES (92 aa)). The segment at 414–422 (KNIFKAART) is linker. Residues 425 to 445 (VYFACAVIMYILSGIFGLVGL) form a helical membrane-spanning segment. Topologically, residues 446–448 (YTF) are lumenal. The helical transmembrane segment at 449–469 (ANFCNLVMGVALLTLALWAYI) threads the bilayer. At 470-541 (RYSGELSDFG…NASNGKVKRS (72 aa)) the chain is on the cytoplasmic side. The residue at position 514 (threonine 514) is a Phosphothreonine.

Belongs to the TRAFAC class dynamin-like GTPase superfamily. GB1/RHD3 GTPase family. GB1 subfamily. In terms of assembly, monomeric and homodimeric. The homodimer, transiently formed by two molecules on opposing membranes, is the active form mediating ER membrane fusion. Interacts with spas; interaction may regulate microtubule dynamics. In terms of tissue distribution, ubiquitously expressed.

The protein localises to the endoplasmic reticulum membrane. The protein resides in the golgi apparatus membrane. It catalyses the reaction GTP + H2O = GDP + phosphate + H(+). Its function is as follows. Membrane-anchored GTPase that mediates the GTP-dependent fusion of endoplasmic reticulum (ER) membranes, maintaining the continuous ER network. It facilitates the formation of three-way junctions where ER tubules intersect. Two atlastin-1 on neighboring ER tubules bind GTP and form loose homodimers through the GB1/RHD3-type G domains and 3HB regions. Upon GTP hydrolysis, the 3HB regions tighten, pulling the membranes together to drive their fusion. After fusion, the homodimer disassembles upon release of inorganic phosphate (Pi). Subsequently, GDP dissociates, resetting the monomers to a conformation ready for a new fusion cycle. May also regulate more or less directly Golgi biogenesis. May also regulate microtubule polymerization and Golgi biogenesis. Required for dopaminergic neurons survival and the growth of muscles and synapses at neuromuscular junctions. This is Atlastin (atl) from Drosophila melanogaster (Fruit fly).